A 443-amino-acid polypeptide reads, in one-letter code: Trigger factor (443 aa).

Residues 164–249 form the PPIase FKBP-type domain; the sequence is GDVLCVDFVG…AKSLKKAVDP (86 aa).

It belongs to the FKBP-type PPIase family. Tig subfamily.

The protein resides in the cytoplasm. It catalyses the reaction [protein]-peptidylproline (omega=180) = [protein]-peptidylproline (omega=0). Its function is as follows. Involved in protein export. Acts as a chaperone by maintaining the newly synthesized protein in an open conformation. Functions as a peptidyl-prolyl cis-trans isomerase. The polypeptide is Trigger factor (Gluconobacter oxydans (strain 621H) (Gluconobacter suboxydans)).